The primary structure comprises 438 residues: tRNA modification GTPase MnmE (438 aa).

The (6S)-5-formyl-5,6,7,8-tetrahydrofolate site is built by Arg-19, Glu-76, and Lys-115. Positions 211–363 (GYKVAIIGRP…LSKELESYLN (153 aa)) constitute a TrmE-type G domain. GTP-binding positions include 221–226 (NVGKSS), 240–246 (SETAGTT), and 265–268 (DTAG). Mg(2+) is bound by residues Ser-225 and Thr-246. Lys-438 provides a ligand contact to (6S)-5-formyl-5,6,7,8-tetrahydrofolate.

It belongs to the TRAFAC class TrmE-Era-EngA-EngB-Septin-like GTPase superfamily. TrmE GTPase family. As to quaternary structure, homodimer. Heterotetramer of two MnmE and two MnmG subunits. Requires K(+) as cofactor.

The protein resides in the cytoplasm. In terms of biological role, exhibits a very high intrinsic GTPase hydrolysis rate. Involved in the addition of a carboxymethylaminomethyl (cmnm) group at the wobble position (U34) of certain tRNAs, forming tRNA-cmnm(5)s(2)U34. The chain is tRNA modification GTPase MnmE from Campylobacter fetus subsp. fetus (strain 82-40).